The primary structure comprises 208 residues: Uracil phosphoribosyltransferase (208 aa).

5-phospho-alpha-D-ribose 1-diphosphate-binding positions include R78, R103, and 130–138 (DPMLATGGS). Uracil is bound by residues I193 and 198 to 200 (GDA). D199 provides a ligand contact to 5-phospho-alpha-D-ribose 1-diphosphate.

Belongs to the UPRTase family. It depends on Mg(2+) as a cofactor.

The catalysed reaction is UMP + diphosphate = 5-phospho-alpha-D-ribose 1-diphosphate + uracil. The protein operates within pyrimidine metabolism; UMP biosynthesis via salvage pathway; UMP from uracil: step 1/1. With respect to regulation, allosterically activated by GTP. Functionally, catalyzes the conversion of uracil and 5-phospho-alpha-D-ribose 1-diphosphate (PRPP) to UMP and diphosphate. This is Uracil phosphoribosyltransferase from Haemophilus ducreyi (strain 35000HP / ATCC 700724).